We begin with the raw amino-acid sequence, 87 residues long: Large ribosomal subunit protein bL27 (87 aa).

Belongs to the bacterial ribosomal protein bL27 family.

The sequence is that of Large ribosomal subunit protein bL27 from Paenarthrobacter aurescens (strain TC1).